The primary structure comprises 401 residues: Phosphoglycerate kinase (401 aa).

Substrate contacts are provided by residues 26–28 (DFN), Arg-41, 64–67 (HLGK), Arg-125, and Arg-158. ATP is bound by residues Lys-209, Gly-300, Glu-331, and 357–360 (GGDS).

Belongs to the phosphoglycerate kinase family. Monomer.

The protein resides in the cytoplasm. It catalyses the reaction (2R)-3-phosphoglycerate + ATP = (2R)-3-phospho-glyceroyl phosphate + ADP. Its pathway is carbohydrate degradation; glycolysis; pyruvate from D-glyceraldehyde 3-phosphate: step 2/5. The sequence is that of Phosphoglycerate kinase from Clostridium tetani (strain Massachusetts / E88).